The primary structure comprises 315 residues: THO complex subunit 3 (315 aa).

6 WD repeats span residues 18-57 (GHKK…HSKA), 64-104 (GHTD…CTQQ), 106-145 (ELSG…PLHR), 189-228 (AHTA…CLRT), 231-270 (KLEW…TVHQ), and 272-311 (PCRA…RIFG).

Belongs to the THOC3 family. Component of the THO complex, which is composed of THO1, THO2, THO3, THO5, THO6 and THO7.

The protein resides in the nucleus. Functionally, acts as a component of the THO subcomplex of the TREX complex which is thought to couple mRNA transcription, processing and nuclear export. Contributes to the integrity of the endogenous trans-acting small interfering RNA (ta-siRNA) pathway. May process or transport a long RNA molecule so that it can be a template for secondary siRNA production. May participate in the trafficking of siRNA precursors to the ARGONAUTE catalytic center. Required for the generation of functional messenger ribonucleoproteins (mRNPs). In Arabidopsis thaliana (Mouse-ear cress), this protein is THO complex subunit 3 (THO3).